The following is a 240-amino-acid chain: PF03932 family protein CutC (240 aa).

Belongs to the CutC family.

Its subcellular location is the cytoplasm. The protein is PF03932 family protein CutC of Xanthomonas campestris pv. campestris (strain 8004).